We begin with the raw amino-acid sequence, 314 residues long: tRNA uridine(34) hydroxylase (314 aa).

Residues 140 to 234 (SRDDVILVDT…YLEETPAEES (95 aa)) enclose the Rhodanese domain. Catalysis depends on Cys-194, which acts as the Cysteine persulfide intermediate.

It belongs to the TrhO family.

The catalysed reaction is uridine(34) in tRNA + AH2 + O2 = 5-hydroxyuridine(34) in tRNA + A + H2O. Catalyzes oxygen-dependent 5-hydroxyuridine (ho5U) modification at position 34 in tRNAs. The sequence is that of tRNA uridine(34) hydroxylase from Acinetobacter baylyi (strain ATCC 33305 / BD413 / ADP1).